We begin with the raw amino-acid sequence, 89 residues long: Small ribosomal subunit protein uS19 (89 aa).

It belongs to the universal ribosomal protein uS19 family.

In terms of biological role, protein S19 forms a complex with S13 that binds strongly to the 16S ribosomal RNA. In Stenotrophomonas maltophilia (strain R551-3), this protein is Small ribosomal subunit protein uS19.